Reading from the N-terminus, the 359-residue chain is Stearoyl-CoA desaturase (359 aa).

Residues 1 to 72 (MPAHLLQDDI…EGPSPKVEYV (72 aa)) lie on the Cytoplasmic side of the membrane. A helical transmembrane segment spans residues 73 to 93 (WRNIILMSLLHLGALYGITLI). Asn-75 lines the substrate pocket. Over 94 to 97 (PTCK) the chain is Lumenal. Residues 98-118 (FYTWLWGVFYYFVSALGITAG) form a helical membrane-spanning segment. Topologically, residues 119–217 (AHRLWSHRSY…EKLVMFQRRY (99 aa)) are cytoplasmic. Fe cation-binding residues include His-120 and His-125. The short motif at 120–125 (HRLWSH) is the Histidine box-1 element. The substrate site is built by Asn-148, Arg-155, and Asp-156. 3 residues coordinate Fe cation: His-157, His-160, and His-161. Positions 157–161 (HRAHH) match the Histidine box-2 motif. Substrate-binding residues include Arg-188 and Lys-189. Phosphoserine is present on residues Ser-198 and Ser-203. The helical transmembrane segment at 218-237 (YKPGLLMMCFILPTLVPWYF) threads the bilayer. Over 238–241 (WGET) the chain is Lumenal. The helical transmembrane segment at 242–263 (FQNSVFVATFLRYAVVLNATWL) threads the bilayer. Trp-262 lines the substrate pocket. The Cytoplasmic portion of the chain corresponds to 264 to 359 (VNSAAHLFGY…RTGDGNYKSG (96 aa)). His-269, His-298, His-301, and His-302 together coordinate Fe cation. Residues 298–302 (HNYHH) carry the Histidine box-3 motif.

It belongs to the fatty acid desaturase type 1 family. In terms of assembly, may self-associate and form homodimers. Fe(2+) serves as cofactor. As to expression, detected in fetal liver, lung and brain. Highly expressed in adult adipose tissue, and at lower levels in adult brain and lung.

The protein resides in the endoplasmic reticulum membrane. The enzyme catalyses octadecanoyl-CoA + 2 Fe(II)-[cytochrome b5] + O2 + 2 H(+) = (9Z)-octadecenoyl-CoA + 2 Fe(III)-[cytochrome b5] + 2 H2O. It carries out the reaction hexadecanoyl-CoA + 2 Fe(II)-[cytochrome b5] + O2 + 2 H(+) = (9Z)-hexadecenoyl-CoA + 2 Fe(III)-[cytochrome b5] + 2 H2O. Stearoyl-CoA desaturase that utilizes O(2) and electrons from reduced cytochrome b5 to introduce the first double bond into saturated fatty acyl-CoA substrates. Catalyzes the insertion of a cis double bond at the delta-9 position into fatty acyl-CoA substrates including palmitoyl-CoA and stearoyl-CoA. Gives rise to a mixture of 16:1 and 18:1 unsaturated fatty acids. Plays an important role in lipid biosynthesis. Plays an important role in regulating the expression of genes that are involved in lipogenesis and in regulating mitochondrial fatty acid oxidation. Plays an important role in body energy homeostasis. Contributes to the biosynthesis of membrane phospholipids, cholesterol esters and triglycerides. The protein is Stearoyl-CoA desaturase (SCD) of Homo sapiens (Human).